A 1017-amino-acid chain; its full sequence is Sodium/potassium-transporting ATPase subunit alpha-2 (1017 aa).

The segment at 1–31 (MDGREYSPAATTSENGGGRRKQKEKELDELK) is disordered. The Cytoplasmic segment spans residues 1–82 (MDGREYSPAA…NALTPPPTTP (82 aa)). The interval 77-79 (PPP) is interaction with phosphoinositide-3 kinase. Residues 83–103 (EWVKFCRQLFGGFSILLWIGA) traverse the membrane as a helical segment. The Extracellular segment spans residues 104-126 (ILCFLAYGIQAAMEDEPSNDNLY). The chain crosses the membrane as a helical span at residues 127–147 (LGVVLAAVVIVTGCFSYYQEA). The Cytoplasmic segment spans residues 148–283 (KSSKIMDSFK…VGRTPIAMEI (136 aa)). Residues 207–228 (KVDNSSLTGESEPQTRSPEFTH) are disordered. Residues 209 to 224 (DNSSLTGESEPQTRSP) show a composition bias toward polar residues. Residues 284-303 (EHFIRLITGVAVFLGLSFFI) form a helical membrane-spanning segment. The Extracellular segment spans residues 304 to 315 (LSLILGYTWLEA). A helical transmembrane segment spans residues 316 to 333 (VIFLIGIIVANVPEGLLA). The Cytoplasmic segment spans residues 334–766 (TVTVCLTLTA…EEGRLIFDNL (433 aa)). D371 (4-aspartylphosphate intermediate) is an active-site residue. K502 lines the ATP pocket. Positions 711 and 715 each coordinate Mg(2+). A helical transmembrane segment spans residues 767–786 (KKSIAYTLTSNIPEITPFLL). Topologically, residues 787–796 (FIIANIPLPL) are extracellular. Residues 797-817 (GTVTILCIDLGTDMVPAISLA) form a helical membrane-spanning segment. The Cytoplasmic segment spans residues 818–837 (YEAAESDIMKRQPRNPRTDK). Residues 838–860 (LVNERLISMAYGQIGMIQALGGF) form a helical membrane-spanning segment. Over 861 to 912 (FTYFVILAENGFLPARLLGVRLAWDDRSTNDLEDSYGQEWTYEQRKVVEFTC) the chain is Extracellular. A helical transmembrane segment spans residues 913-932 (HTAFFASIVVVQWADLIICK). The Cytoplasmic portion of the chain corresponds to 933-945 (TRRNSVFQQGMKN). S937 is modified (phosphoserine; by PKA). Residues 946–964 (KILIFGLLEETALAAFLSY) form a helical membrane-spanning segment. Over 965 to 979 (CPGMGVALRMYPLKV) the chain is Extracellular. The chain crosses the membrane as a helical span at residues 980–1000 (TWWFCAFPYSLLIFAYDEVRK). Residues 1001–1017 (LILRRYPGGWVEKETYY) are Cytoplasmic-facing.

It belongs to the cation transport ATPase (P-type) (TC 3.A.3) family. Type IIC subfamily. The sodium/potassium-transporting ATPase is composed of a catalytic alpha subunit, an auxiliary non-catalytic beta subunit and an additional regulatory subunit.

Its subcellular location is the membrane. It is found in the cell membrane. It carries out the reaction K(+)(out) + Na(+)(in) + ATP + H2O = K(+)(in) + Na(+)(out) + ADP + phosphate + H(+). Functionally, this is the catalytic component of the active enzyme, which catalyzes the hydrolysis of ATP coupled with the exchange of sodium and potassium ions across the plasma membrane. This action creates the electrochemical gradient of sodium and potassium ions, providing the energy for active transport of various nutrients. This chain is Sodium/potassium-transporting ATPase subunit alpha-2 (ATP1A2), found in Gallus gallus (Chicken).